The sequence spans 431 residues: Enolase (431 aa).

Glutamine 166 provides a ligand contact to (2R)-2-phosphoglycerate. Residue glutamate 208 is the Proton donor of the active site. Positions 245, 288, and 315 each coordinate Mg(2+). (2R)-2-phosphoglycerate-binding residues include lysine 340, arginine 369, serine 370, and lysine 391. Residue lysine 340 is the Proton acceptor of the active site.

It belongs to the enolase family. Requires Mg(2+) as cofactor.

The protein resides in the cytoplasm. It is found in the secreted. The protein localises to the cell surface. The catalysed reaction is (2R)-2-phosphoglycerate = phosphoenolpyruvate + H2O. The protein operates within carbohydrate degradation; glycolysis; pyruvate from D-glyceraldehyde 3-phosphate: step 4/5. In terms of biological role, catalyzes the reversible conversion of 2-phosphoglycerate (2-PG) into phosphoenolpyruvate (PEP). It is essential for the degradation of carbohydrates via glycolysis. The protein is Enolase of Clostridium botulinum (strain Okra / Type B1).